A 141-amino-acid chain; its full sequence is Protein GAT3 (141 aa).

The GATA-type zinc-finger motif lies at 72 to 98; that stretch reads CPQCAVIKTSPQWREGPDGEVTLCNAC.

This is Protein GAT3 (GAT3) from Saccharomyces cerevisiae (strain ATCC 204508 / S288c) (Baker's yeast).